The sequence spans 376 residues: Queuine tRNA-ribosyltransferase (376 aa).

Asp89 (proton acceptor) is an active-site residue. Substrate contacts are provided by residues 89-93, Asp143, Gln194, and Gly221; that span reads DSGGF. The RNA binding stretch occupies residues 252 to 258; it reads GVGTPSN. The active-site Nucleophile is the Asp271. An RNA binding; important for wobble base 34 recognition region spans residues 276–280; the sequence is ARNGR. 4 residues coordinate Zn(2+): Cys309, Cys311, Cys314, and His340.

It belongs to the queuine tRNA-ribosyltransferase family. In terms of assembly, homodimer. Within each dimer, one monomer is responsible for RNA recognition and catalysis, while the other monomer binds to the replacement base PreQ1. Zn(2+) is required as a cofactor.

It carries out the reaction 7-aminomethyl-7-carbaguanine + guanosine(34) in tRNA = 7-aminomethyl-7-carbaguanosine(34) in tRNA + guanine. The protein operates within tRNA modification; tRNA-queuosine biosynthesis. Functionally, catalyzes the base-exchange of a guanine (G) residue with the queuine precursor 7-aminomethyl-7-deazaguanine (PreQ1) at position 34 (anticodon wobble position) in tRNAs with GU(N) anticodons (tRNA-Asp, -Asn, -His and -Tyr). Catalysis occurs through a double-displacement mechanism. The nucleophile active site attacks the C1' of nucleotide 34 to detach the guanine base from the RNA, forming a covalent enzyme-RNA intermediate. The proton acceptor active site deprotonates the incoming PreQ1, allowing a nucleophilic attack on the C1' of the ribose to form the product. After dissociation, two additional enzymatic reactions on the tRNA convert PreQ1 to queuine (Q), resulting in the hypermodified nucleoside queuosine (7-(((4,5-cis-dihydroxy-2-cyclopenten-1-yl)amino)methyl)-7-deazaguanosine). The sequence is that of Queuine tRNA-ribosyltransferase from Clostridium acetobutylicum (strain ATCC 824 / DSM 792 / JCM 1419 / IAM 19013 / LMG 5710 / NBRC 13948 / NRRL B-527 / VKM B-1787 / 2291 / W).